The sequence spans 354 residues: MSGEKTEQPTPKKIRDARKKGQVAKSKEVVSTALIVALSAMLMGLSDYYFEHFSKLMLIPAEQSYLPFSQALSYVVDNVLLEFFYLCFPLLTVAALMAIASHVVQYGFLISGEAIKPDIKKINPIEGAKRIFSIKSLVEFLKSILKVVLLSILIWIIIKGNLVTLLQLPTCGIECITPLLGQILRQLMVICTVGFVVISIADYAFEYYQYIKELKMSKDEIKREYKEMEGSPEIKSKRRQFHQEIQSRNMRENVKRSSVVVANPTHIAIGILYKRGETPLPLVTFKYTDAQVQTVRKIAEEEGVPILQRIPLARALYWDALVDHYIPAEQIEATAEVLRWLERQNIEKQHSEML.

The segment at methionine 1 to lysine 20 is disordered. Transmembrane regions (helical) follow at residues valine 30–phenylalanine 50, valine 79–isoleucine 99, valine 138–isoleucine 158, valine 163–isoleucine 183, and leucine 187–tyrosine 207.

Belongs to the type III secretion exporter family.

The protein resides in the cell membrane. Functionally, component of the yop secretion machinery. This Yersinia pestis protein is Yop proteins translocation protein U (yscU).